The chain runs to 92 residues: Small ribosomal subunit protein bS18 (92 aa).

Belongs to the bacterial ribosomal protein bS18 family. As to quaternary structure, part of the 30S ribosomal subunit. Forms a tight heterodimer with protein bS6.

In terms of biological role, binds as a heterodimer with protein bS6 to the central domain of the 16S rRNA, where it helps stabilize the platform of the 30S subunit. This is Small ribosomal subunit protein bS18 from Pelagibacter ubique (strain HTCC1062).